A 958-amino-acid chain; its full sequence is MIFLKLIKSIVIGLGLVSAIQAAPASSIGSSASASSSSESSQATIPNDVTLGVKQIPNIFNDSAVDANAAAKGYDLVNVTNTPRGLTGILKLKEATNIYGYDFDYLNLTVEYQADTRLNVHIEPTDLSDVFVLPEHLVVKPLVEGDAQSYNFDNSDLVFEYSNTDFSFEVIRSSTKEVLFSTKGNPLVFSNQFIQFNSSLPKNHVITGLGESIHGLVNEPGSVKTLFANDVGDPIDGNIYGVHPVYLDQRYDTETTHAVYWRTSAIQEVLIGEESITWRALSGVIDLYFFSGPTPKDAIQQYVKEIGLPAFQPYWSLGYHQCRWGYDTIEKLSEVVENFKKFNIPLETIWSDIDYMDSYKDFTYDPHRFPLDEYRKFLDELHKNNQHYVPILDAAIYVPNPNNATDNEYQPFHYGNETDVFLKNPDGSLYIGAVWQVTLFSRFLSRKHSDMDKVIKDWYELTPFDGIWADMNEVSSFCVGSCGTGKYFENPAYPPFTVGSKATSYPVGFDVSNASEWKSIQSSISATAKTSSTSSVSSSSSTIDYMNTLAPGKGNINYPPYAIYNMQGDSDLATHAVSPNATHADGTVEYDIHNLYGYLQENATYHALLEVFPNKRPFMISRSTFPRAGKWTGHWGGDNTADWAYAYFSIPQAFSMGIAGLPFFGADVCGFNGNSDSELCSRWMQLGSFFPFYRNHNYLGAIDQEPYVWESVAEATRTSMAIRYLLLPYYYTLLHESHTTGLPILRAFSWQFPNDRSLSGVDNQFFVGDGLVVTPVLEPGVDKVKGVFPGAGKEEVYYDWYTQREVHFKDGKNETLDAPLGHIPLHIRGGNVLPTQEPGYTVAESRQNPFGLIVALDNDGKAQGSLYLDDGESLVVDSSLLVSFSVSDNTLSASPSGDYKADQPLANVTILGVGHKPKSVKFENANVDFTYKKSTVFVTGLDKYTKDGAFSKDFTITW.

The first 22 residues, 1 to 22, serve as a signal peptide directing secretion; it reads MIFLKLIKSIVIGLGLVSAIQA. Residues N61, N78, N107, N197, N403, and N416 are each glycosylated (N-linked (GlcNAc...) asparagine). Residues D470 and E473 contribute to the active site. 3 N-linked (GlcNAc...) asparagine glycosylation sites follow: N513, N580, and N602. D638 acts as the Proton donor in catalysis. N813 and N907 each carry an N-linked (GlcNAc...) asparagine glycan.

Belongs to the glycosyl hydrolase 31 family.

The catalysed reaction is Hydrolysis of terminal (1-&gt;4)-linked alpha-D-glucose residues successively from non-reducing ends of the chains with release of beta-D-glucose.. This glucoamylase has a specificity toward both alpha-1,4 and alpha-1,6 linkages. This Schwanniomyces occidentalis (Yeast) protein is Glucoamylase 1 (GAM1).